An 862-amino-acid polypeptide reads, in one-letter code: AP-1 complex subunit gamma-2 (862 aa).

HEAT repeat units follow at residues 1-28 (MNPF…EERA), 29-65 (VVRK…LGYP), 101-136 (EVLM…CSAE), 137-173 (MARD…KVPD), 308-345 (GLRV…VDSQ), 346-382 (AVQR…ENNV), 384-417 (PLAK…KFAP), 418-454 (EKIW…NAPD), 458-496 (YTVR…NNAG), 507-545 (TESD…RFPS), and 560-599 (SFVL…ATFS). The 116-residue stretch at 744 to 859 (AAYPSIVAFE…LEEGQINNFP (116 aa)) folds into the GAE domain.

Belongs to the adaptor complexes large subunit family. As to quaternary structure, adaptor protein complex 1 (AP-1) is a heterotetramer composed of two large adaptins (gamma-type subunit and beta-type subunit), a medium adaptin (mu-type subunit) and a small adaptin (sigma-type subunit).

Its subcellular location is the golgi apparatus. The protein resides in the cytoplasmic vesicle. It is found in the clathrin-coated vesicle membrane. Subunit of clathrin-associated adaptor protein complex 1 that plays a role in protein sorting at the trans-Golgi network and early endosomes (TGN/EE). The AP complexes mediate both the recruitment of clathrin to membranes and the recognition of sorting signals within the cytosolic tails of transmembrane cargo molecules. In Arabidopsis thaliana (Mouse-ear cress), this protein is AP-1 complex subunit gamma-2.